The following is a 285-amino-acid chain: Probable endonuclease 4 (285 aa).

Residues H69, H109, E145, D179, H182, H216, D229, H231, and E261 each coordinate Zn(2+).

Belongs to the AP endonuclease 2 family. The cofactor is Zn(2+).

The catalysed reaction is Endonucleolytic cleavage to 5'-phosphooligonucleotide end-products.. Its function is as follows. Endonuclease IV plays a role in DNA repair. It cleaves phosphodiester bonds at apurinic or apyrimidinic (AP) sites, generating a 3'-hydroxyl group and a 5'-terminal sugar phosphate. The sequence is that of Probable endonuclease 4 from Shigella sonnei (strain Ss046).